A 205-amino-acid polypeptide reads, in one-letter code: Small ribosomal subunit protein uS4 (205 aa).

A disordered region spans residues 18-46 (NIWGRSKSPVNRREYGPGQHGQRRKGKLS). The region spanning 94 to 157 (RRLDAVVYRA…RQMTLVLEAQ (64 aa)) is the S4 RNA-binding domain.

This sequence belongs to the universal ribosomal protein uS4 family. In terms of assembly, part of the 30S ribosomal subunit. Contacts protein S5. The interaction surface between S4 and S5 is involved in control of translational fidelity.

Its function is as follows. One of the primary rRNA binding proteins, it binds directly to 16S rRNA where it nucleates assembly of the body of the 30S subunit. With S5 and S12 plays an important role in translational accuracy. This chain is Small ribosomal subunit protein uS4, found in Xanthobacter autotrophicus (strain ATCC BAA-1158 / Py2).